Consider the following 130-residue polypeptide: Serum amyloid A-4 protein (130 aa).

The first 18 residues, 1 to 18 (MRLFTGIVFCSLVMGVTS), serve as a signal peptide directing secretion. N94 is a glycosylation site (N-linked (GlcNAc...) asparagine; partial). The tract at residues 101-130 (DSKSNEKAEEWGRSGKDPDRFRPDGLPKKY) is disordered.

The protein belongs to the SAA family. In terms of assembly, apolipoprotein of the HDL complex. As to expression, expressed by the liver; secreted in plasma.

It localises to the secreted. Functionally, major acute phase reactant. The protein is Serum amyloid A-4 protein of Homo sapiens (Human).